Here is a 311-residue protein sequence, read N- to C-terminus: 4-hydroxy-tetrahydrodipicolinate synthase (311 aa).

Residue Thr-49 participates in pyruvate binding. Tyr-138 (proton donor/acceptor) is an active-site residue. Lys-166 functions as the Schiff-base intermediate with substrate in the catalytic mechanism. Val-207 is a pyruvate binding site.

This sequence belongs to the DapA family. As to quaternary structure, homotetramer; dimer of dimers.

Its subcellular location is the cytoplasm. The enzyme catalyses L-aspartate 4-semialdehyde + pyruvate = (2S,4S)-4-hydroxy-2,3,4,5-tetrahydrodipicolinate + H2O + H(+). It participates in amino-acid biosynthesis; L-lysine biosynthesis via DAP pathway; (S)-tetrahydrodipicolinate from L-aspartate: step 3/4. Its function is as follows. Catalyzes the condensation of (S)-aspartate-beta-semialdehyde [(S)-ASA] and pyruvate to 4-hydroxy-tetrahydrodipicolinate (HTPA). This Lactobacillus helveticus (strain DPC 4571) protein is 4-hydroxy-tetrahydrodipicolinate synthase.